Consider the following 198-residue polypeptide: Glycerol-3-phosphate acyltransferase (198 aa).

6 helical membrane-spanning segments follow: residues 1–21 (MHIL…GFLF), 50–70 (WPAF…VKIA), 77–97 (NLFE…PIWL), 111–131 (MFIA…LIIL), 136–156 (IVSL…FLDI), and 157–177 (GSTN…VIWK).

It belongs to the PlsY family. As to quaternary structure, probably interacts with PlsX.

The protein resides in the cell inner membrane. It catalyses the reaction an acyl phosphate + sn-glycerol 3-phosphate = a 1-acyl-sn-glycero-3-phosphate + phosphate. Its pathway is lipid metabolism; phospholipid metabolism. Catalyzes the transfer of an acyl group from acyl-phosphate (acyl-PO(4)) to glycerol-3-phosphate (G3P) to form lysophosphatidic acid (LPA). This enzyme utilizes acyl-phosphate as fatty acyl donor, but not acyl-CoA or acyl-ACP. The protein is Glycerol-3-phosphate acyltransferase of Prochlorococcus marinus subsp. pastoris (strain CCMP1986 / NIES-2087 / MED4).